The primary structure comprises 224 residues: uncharacterized protein (224 aa).

Transmembrane regions (helical) follow at residues Leu-39–Ile-59, Tyr-70–Ala-90, Val-103–Ile-123, and Met-139–Thr-159.

Its subcellular location is the membrane. This is an uncharacterized protein from Dictyostelium discoideum (Social amoeba).